A 236-amino-acid chain; its full sequence is DNA repair and recombination protein RadB (236 aa).

It belongs to the eukaryotic RecA-like protein family. RadB subfamily.

Its function is as follows. Involved in DNA repair and in homologous recombination. May regulate the cleavage reactions of the branch-structured DNA. Has a very weak ATPase activity that is not stimulated by DNA. Binds DNA but does not promote DNA strands exchange. The chain is DNA repair and recombination protein RadB from Halobacterium salinarum (strain ATCC 29341 / DSM 671 / R1).